Reading from the N-terminus, the 644-residue chain is UvrABC system protein C (644 aa).

A GIY-YIG domain is found at 47 to 125 (ARPGVYRMLD…IKRYRPPYNV (79 aa)). In terms of domain architecture, UVR spans 235–270 (TAVQKRLGEAMTRAADAMDFEQAAVLRDRLKALTFI).

The protein belongs to the UvrC family. In terms of assembly, interacts with UvrB in an incision complex.

Its subcellular location is the cytoplasm. Functionally, the UvrABC repair system catalyzes the recognition and processing of DNA lesions. UvrC both incises the 5' and 3' sides of the lesion. The N-terminal half is responsible for the 3' incision and the C-terminal half is responsible for the 5' incision. The chain is UvrABC system protein C from Sphingopyxis alaskensis (strain DSM 13593 / LMG 18877 / RB2256) (Sphingomonas alaskensis).